The chain runs to 387 residues: Large ribosomal subunit protein uL3 (387 aa).

Belongs to the universal ribosomal protein uL3 family.

It is found in the cytoplasm. This Kluyveromyces lactis (strain ATCC 8585 / CBS 2359 / DSM 70799 / NBRC 1267 / NRRL Y-1140 / WM37) (Yeast) protein is Large ribosomal subunit protein uL3 (RPL3).